The primary structure comprises 431 residues: MYRFAPSPTGDMHIGNLRAAIFNYICARQKNMDFILRIEDTDKSRNIKGKEEEIKEILNLFGISWQHYYIQSENLKFHRQMALKLVSEKKAFACFCTEEELEAKKELAKKQGKAYRYDGTCEKLADIDVLECEKSFVIRLKKPTHTMKFTDFIKGELSFEPENIDSFVIMRTDKTPTYNFACAVDDMLENVTCIIRGEDHVSNTPKQEHIRASLGYDKAMTYAHLPIILNEEGVKMSKREAHSSVKWLLESGILPSAITNYLIMLGNKTPYEIFTLEEAIKWFDISKVSKAPARFDLKKLLQINREHIKMIKDDELNKILDLNKDLAQLAKFYTQEASTIKELKEKMRAIFNTKDFGEFETECKILKELLKDIELFENYEDFKNKLLNKSSLKGKKFFMPLRIILTGNIHGPELSDLYPYIKNFIHELARI.

Residues 6 to 16 (PSPTGDMHIGN) carry the 'HIGH' region motif. A 'KMSKS' region motif is present at residues 235–239 (KMSKR). Lys-238 contributes to the ATP binding site.

This sequence belongs to the class-I aminoacyl-tRNA synthetase family. Glutamate--tRNA ligase type 1 subfamily. As to quaternary structure, monomer.

Its subcellular location is the cytoplasm. It carries out the reaction tRNA(Glu) + L-glutamate + ATP = L-glutamyl-tRNA(Glu) + AMP + diphosphate. Functionally, catalyzes the attachment of glutamate to tRNA(Glu) in a two-step reaction: glutamate is first activated by ATP to form Glu-AMP and then transferred to the acceptor end of tRNA(Glu). This is Glutamate--tRNA ligase 2 from Campylobacter jejuni subsp. doylei (strain ATCC BAA-1458 / RM4099 / 269.97).